The sequence spans 1013 residues: Antigenic heat-stable 120 kDa protein (1013 aa).

Disordered regions lie at residues 1–73 (DTSE…TSDP) and 348–396 (GQSK…PQSQ). The segment covering 12-27 (EYTEEQKQKLEQEQKE) has biased composition (basic and acidic residues). Low complexity predominate over residues 47–61 (SASSAQSTPSISALS). 3 stretches are compositionally biased toward polar residues: residues 62–73 (GNISPDSQTSDP), 348–373 (GQSK…QYKQ), and 380–396 (PTNQ…PQSQ).

The protein resides in the cytoplasm. This Rickettsia rhipicephali protein is Antigenic heat-stable 120 kDa protein (sca4).